We begin with the raw amino-acid sequence, 74 residues long: NADH dehydrogenase [ubiquinone] 1 alpha subcomplex assembly factor 8 (74 aa).

The region spanning 22-69 (LAACGAEAAAYGRCVQASTAPGGRLSKDFCAREFEALRSCFAAAAKKT) is the CHCH domain. 2 consecutive short sequence motifs (cx9C motif) follow at residues 25–35 (CGAEAAAYGRC) and 51–61 (CAREFEALRSC). 2 disulfide bridges follow: Cys25-Cys61 and Cys35-Cys51.

In terms of assembly, interacts with NDUFAF5.

Its subcellular location is the mitochondrion. Its function is as follows. Involved in the assembly of mitochondrial NADH:ubiquinone oxidoreductase complex (complex I, MT-ND1). Required to stabilize NDUFAF5. This Homo sapiens (Human) protein is NADH dehydrogenase [ubiquinone] 1 alpha subcomplex assembly factor 8.